Reading from the N-terminus, the 302-residue chain is Sulfate adenylyltransferase subunit 2 (302 aa).

Residues R280–F302 form a disordered region.

This sequence belongs to the PAPS reductase family. CysD subfamily. As to quaternary structure, heterodimer composed of CysD, the smaller subunit, and CysN.

It catalyses the reaction sulfate + ATP + H(+) = adenosine 5'-phosphosulfate + diphosphate. It functions in the pathway sulfur metabolism; hydrogen sulfide biosynthesis; sulfite from sulfate: step 1/3. Functionally, with CysN forms the ATP sulfurylase (ATPS) that catalyzes the adenylation of sulfate producing adenosine 5'-phosphosulfate (APS) and diphosphate, the first enzymatic step in sulfur assimilation pathway. APS synthesis involves the formation of a high-energy phosphoric-sulfuric acid anhydride bond driven by GTP hydrolysis by CysN coupled to ATP hydrolysis by CysD. In Shewanella amazonensis (strain ATCC BAA-1098 / SB2B), this protein is Sulfate adenylyltransferase subunit 2.